Consider the following 378-residue polypeptide: MLKLMGSLVLLASAAEVIASPAAEPVAPSTTLEKRAPCTFSGSNGAAAAMASQKACSTIVLSNVAVPAGTTLDLSDLADGTTVTFEGETTWGYQEWSGPLLKISGKNIKVKGASGATLNPDGARWWDGQGGNGGKTKPKFFAAHDLTSSSSITDLHILNTPVQAVSINGCDGLTITDITIDNSAGDTQGGHNTDAFDIGSSSNIIISGAKVYNQDDCVAVNSGTDITFTGGLCSGGHGLSIGSVGGRSDNTVENVSFTNSQVTNSDNGLRIKATKGKTGTIKGVTYSGITLSSIRKYGILIEQNYDGGDLKGDPTSGIPITDLTMQNISGKGAVASSGYNIAIVCGSGACSNWTWKSVEVTGGKTYGSCKNVPSVAQC.

Residues Met-1–Ala-19 form the signal peptide. A propeptide spanning residues Ser-20 to Arg-35 is cleaved from the precursor. A disulfide bridge links Cys-38 with Cys-56. PbH1 repeat units follow at residues Thr-147–Gly-169, Cys-170–Ser-200, and Ser-201–Ser-222. Asp-215 serves as the catalytic Proton donor. A disulfide bridge connects residues Cys-217 and Cys-233. His-237 is a catalytic residue. PbH1 repeat units lie at residues Val-252–Ala-273 and Ile-281–Gln-303. A glycan (N-linked (GlcNAc...) asparagine) is linked at Asn-254. A glycan (N-linked (GlcNAc...) asparagine) is linked at Asn-327. Cys-345 and Cys-350 are disulfide-bonded. N-linked (GlcNAc...) asparagine glycosylation is present at Asn-352. The cysteines at positions 369 and 378 are disulfide-linked.

The protein belongs to the glycosyl hydrolase 28 family.

It is found in the secreted. The enzyme catalyses (1,4-alpha-D-galacturonosyl)n+m + H2O = (1,4-alpha-D-galacturonosyl)n + (1,4-alpha-D-galacturonosyl)m.. In terms of biological role, involved in maceration and soft-rotting of plant tissue. Hydrolyzes the 1,4-alpha glycosidic bonds of de-esterified pectate in the smooth region of the plant cell wall. The sequence is that of Probable endopolygalacturonase AFUB_016610 from Aspergillus fumigatus (strain CBS 144.89 / FGSC A1163 / CEA10) (Neosartorya fumigata).